A 198-amino-acid chain; its full sequence is MNLRPMPATTVSAQARPTPKSVTVFCGAMPGRGTKYGQLAEGMGRAIARSKLRLVYGGARVGLMGTLANAALDSGGTVVGVIPESFTAIPEAAHHGLTELHVVHDMHQRKALMAELGDAFIALPGGVGTAEEFFEVLTWSHLGLHNKPCVLLNDNEYYRPLLSYIEHAAVEGFITPATRSRVIVCKDIEGAIAAIRSP.

Substrate is bound by residues Glu91, 109-110 (RK), 126-132 (GVGTAEE), and Thr138.

This sequence belongs to the LOG family.

It carries out the reaction N(6)-(dimethylallyl)adenosine 5'-phosphate + H2O = N(6)-dimethylallyladenine + D-ribose 5-phosphate. The catalysed reaction is 9-ribosyl-trans-zeatin 5'-phosphate + H2O = trans-zeatin + D-ribose 5-phosphate. In terms of biological role, catalyzes the hydrolytic removal of ribose 5'-monophosphate from nitrogen N6-modified adenosines, the final step of bioactive cytokinin synthesis. The protein is Cytokinin riboside 5'-monophosphate phosphoribohydrolase (fas6) of Rhodococcoides fascians (Rhodococcus fascians).